A 214-amino-acid polypeptide reads, in one-letter code: Intermembrane phospholipid transport system binding protein MlaC (214 aa).

The signal sequence occupies residues Met-1–Ala-28.

Belongs to the MlaC/ttg2D family.

The protein localises to the periplasm. Its function is as follows. Involved in a phospholipid transport pathway that maintains lipid asymmetry in the outer membrane by retrograde trafficking of phospholipids from the outer membrane to the inner membrane. May transfer phospholipid across the periplasmic space and deliver it to the MlaFEDB complex at the inner membrane. The polypeptide is Intermembrane phospholipid transport system binding protein MlaC (Haemophilus influenzae (strain ATCC 51907 / DSM 11121 / KW20 / Rd)).